We begin with the raw amino-acid sequence, 239 residues long: MDTVGLFSAEVEHLFIEWIKKHIKKGDLTLFERFFKADPWIVNRCDRSKITVFMWICIYGRLDFLRFLFKQESYPGEIISHYRRDKDGNSVWHYLAEKKNHLLLEEVLEYFGKIGIKVCFRNFNGITPVMKAAMRGRTLSVLSLIKYGANPNQKDYLKGFNTWDWAVFTGHADLVKSLNKDYQKPLFMHFPLYKLDVFHRRHKKKPKIIITSCEDNVYEKLPEQNPNFLCVKKLNKYGK.

ANK repeat units lie at residues 48-80 (SKIT…EIIS), 87-118 (DGNS…GIKV), 124-153 (NGIT…NPNQ), and 158-187 (KGFN…KPLF). The Nuclear localization signal signature appears at 81 to 87 (HYRRDKD). The Nuclear localization signal motif lies at 203–214 (KKKPKIIITSCE). Positions 206–213 (PKIIITSC) match the PxIxITxC motif; Interaction with host PPP3CA motif. Positions 228–231 (FLCV) match the FLCV motif motif.

The protein belongs to the asfivirus A238L family. Interacts with host PPIA. Interacts with host PPP3CA/Calcineurin. Interacts with host RELA/p65; interaction of the 32 kDa form with host RELA results in the formation of a stable complex with NF-kappa-B. Interacts with host PPP3R1. Interacts with host EP300; this interaction inhibits the association of host EP300 with host RELA, JUN and NFATC2. Post-translationally, the protein exists in a 28 kDa and a 32 kDa form, probably due to post-translational modifications which are neither phosphorylation, nor sumoylation.

It localises to the host nucleus. Its subcellular location is the host cytoplasm. In terms of biological role, ikB-like protein that inhibits the binding of NF-kappa-B to DNA, thereby downregulating pro-inflammatory cytokine production. Forms a heterodimer with the NF-kappa-B subunit RELA/p65 and prevents the activation of the NF-kappa-B transcription factor. Inhibits calcineurin function, which is required for the induction of nuclear factor of activated T cells (NFAT)-dependent immune response genes. Prevents the binding of substrates to calcineurin without affecting the phosphatase activity. Does not contain the serine residues that are phosphorylated by host IkB kinase and thus is not degraded following stimulation of the NFkB pathway. The protein is IkB-like protein (A238L) of Ornithodoros (relapsing fever ticks).